Consider the following 448-residue polypeptide: Probable 3-ketoacyl-CoA thiolase (448 aa).

The Acyl-thioester intermediate role is filled by Cys-110. Catalysis depends on proton acceptor residues His-402 and Cys-432.

It belongs to the thiolase-like superfamily. Thiolase family.

It is found in the mitochondrion. The enzyme catalyses an acyl-CoA + acetyl-CoA = a 3-oxoacyl-CoA + CoA. It functions in the pathway lipid metabolism; fatty acid beta-oxidation. Functionally, mitochondrial enzyme that catalyzes reactions of the mitochondrial beta-oxidation pathway. This chain is Probable 3-ketoacyl-CoA thiolase, found in Caenorhabditis elegans.